Consider the following 142-residue polypeptide: Large ribosomal subunit protein bL21 (142 aa).

The segment covering 74–84 (RRRQNSKRTRG) has biased composition (basic residues). The segment at 74-142 (RRRQNSKRTR…KAAAKAESAE (69 aa)) is disordered. A compositionally biased stretch (basic and acidic residues) spans 107 to 125 (KAAEKKAPKADAAEGEAAK). Residues 126–135 (PKKAAPKKAA) are compositionally biased toward basic residues.

It belongs to the bacterial ribosomal protein bL21 family. As to quaternary structure, part of the 50S ribosomal subunit. Contacts protein L20.

In terms of biological role, this protein binds to 23S rRNA in the presence of protein L20. The sequence is that of Large ribosomal subunit protein bL21 from Brucella melitensis biotype 2 (strain ATCC 23457).